The following is an 803-amino-acid chain: Mechanosensitive cation channel TMEM63A (803 aa).

The Extracellular segment spans residues 1-51 (MTDSPFLELWQSRTVAIRERLGIGDQPNDSYCYNSAKNSTVLQGVTFGGIP). A helical membrane pass occupies residues 52 to 74 (TVLFIDVSCFLFLIVVFSIIRRK). Topologically, residues 75–133 (FWDYGRIALVSEGNSESRFRRLSSSSSGQQDFESELGCCSWLTAIFRLHDDQILEWCGE) are cytoplasmic. The helical transmembrane segment at 134 to 166 (DAIHYLSFQRHIIFLLVVVSCLSLCIILPVNLS) threads the bilayer. The Extracellular segment spans residues 167–190 (GDLLDKDPYSFGRTTIANLQTDNN). Residues 191 to 216 (LLWLHTIFAILYLILTVVFMRHHTQS) form a helical membrane-spanning segment. Topologically, residues 217 to 415 (IKYKEESLVR…CWKNLSIQGF (199 aa)) are cytoplasmic. Residues 218–413 (KYKEESLVRR…DICWKNLSIQ (196 aa)) are intracellular linker IL2; confers mechanosensitivity. The chain crosses the membrane as a helical span at residues 416 to 443 (RWWFQWLGINFILFVGLFFLTTPSIILS). Over 444-461 (TMDKFNVTKPIHALNDPI) the chain is Extracellular. The helical transmembrane segment at 462–489 (ISQFFPTLLLWSFSALLPTIVCYSTLLE) threads the bilayer. At 490–494 (SHWTK) the chain is on the cytoplasmic side. A helical transmembrane segment spans residues 495–531 (SGENRIMMTKVYIFLIFMVLILPSLGLTSLDFFFRWL). Over 532-553 (FDKTSSEASIRLECVFLPDQGA) the chain is Extracellular. The helical transmembrane segment at 554 to 585 (FFVNYVIASAFIGNGMELLRLPGLILYTFRMV) threads the bilayer. A gating helix region spans residues 554-585 (FFVNYVIASAFIGNGMELLRLPGLILYTFRMV). Over 586-605 (MAKTAADRRNVKQHQAFEYE) the chain is Cytoplasmic. Residues 606–623 (FGAMYAWMLCVFTVIMAY) form a helical membrane-spanning segment. The Extracellular portion of the chain corresponds to 624-627 (SITC). The helical transmembrane segment at 628–650 (PIIVPFGLIYILLKHMVDRHNLY) threads the bilayer. Residues 651–660 (FAYLPAKLEK) lie on the Cytoplasmic side of the membrane. Residues 661–688 (RIHFAAVNQALAAPILCLFWLYFFSFLR) traverse the membrane as a helical segment. Topologically, residues 689–693 (LGLKA) are extracellular. A helical transmembrane segment spans residues 694 to 708 (PLTLFTFLVLLLTIL). Residues 709–803 (VCLAYTCFGC…DSVAAADQED (95 aa)) are Cytoplasmic-facing.

Belongs to the CSC1 (TC 1.A.17) family. (Microbial infection) Interacts with H.contortus GAL-1 (via domain galectin 1).

Its subcellular location is the lysosome membrane. The protein localises to the early endosome membrane. It is found in the cell membrane. It catalyses the reaction Ca(2+)(in) = Ca(2+)(out). Functionally, mechanosensitive cation channel with low conductance and high activation threshold. In contrast to TMEM63B, does not show phospholipid scramblase activity. Acts as a regulator of lysosomal morphology by mediating lysosomal mechanosensitivity. Important for the baby's first breath and respiration throughout life. Upon lung inflation conducts cation currents in alveolar type 1 and 2 cells triggering lamellar body exocytosis and surfactant secretion into airspace. Also acts as an osmosensitive cation channel preferentially activated by hypotonic stress. (Microbial infection) Involved in the immunomodulatory effects exerted by H.contortus GAL-1 on host peripheral blood mononuclear cells to down-regulate host immune response. The sequence is that of Mechanosensitive cation channel TMEM63A (TMEM63A) from Capra hircus (Goat).